A 324-amino-acid polypeptide reads, in one-letter code: Phospho-N-acetylmuramoyl-pentapeptide-transferase (324 aa).

Transmembrane regions (helical) follow at residues Gly-5–Ile-25, Pro-52–Ile-72, Leu-77–Leu-97, Val-122–Ile-142, Phe-149–Ala-169, Leu-176–Val-196, Phe-201–Asn-221, Val-227–Leu-247, Leu-253–Ile-273, and Val-302–Val-322.

The protein belongs to the glycosyltransferase 4 family. MraY subfamily. The cofactor is Mg(2+).

The protein localises to the cell membrane. It catalyses the reaction UDP-N-acetyl-alpha-D-muramoyl-L-alanyl-gamma-D-glutamyl-meso-2,6-diaminopimeloyl-D-alanyl-D-alanine + di-trans,octa-cis-undecaprenyl phosphate = di-trans,octa-cis-undecaprenyl diphospho-N-acetyl-alpha-D-muramoyl-L-alanyl-D-glutamyl-meso-2,6-diaminopimeloyl-D-alanyl-D-alanine + UMP. It participates in cell wall biogenesis; peptidoglycan biosynthesis. In terms of biological role, catalyzes the initial step of the lipid cycle reactions in the biosynthesis of the cell wall peptidoglycan: transfers peptidoglycan precursor phospho-MurNAc-pentapeptide from UDP-MurNAc-pentapeptide onto the lipid carrier undecaprenyl phosphate, yielding undecaprenyl-pyrophosphoryl-MurNAc-pentapeptide, known as lipid I. In Bacillus mycoides (strain KBAB4) (Bacillus weihenstephanensis), this protein is Phospho-N-acetylmuramoyl-pentapeptide-transferase.